We begin with the raw amino-acid sequence, 396 residues long: 1-deoxy-D-xylulose 5-phosphate reductoisomerase (396 aa).

Residues Thr-10, Gly-11, Ser-12, Ile-13, and Asn-123 each contribute to the NADPH site. A 1-deoxy-D-xylulose 5-phosphate-binding site is contributed by Lys-124. Glu-125 provides a ligand contact to NADPH. A Mn(2+)-binding site is contributed by Asp-149. The 1-deoxy-D-xylulose 5-phosphate site is built by Ser-150, Glu-151, Ser-185, and His-208. Glu-151 lines the Mn(2+) pocket. Gly-214 contacts NADPH. Positions 221, 226, 227, and 230 each coordinate 1-deoxy-D-xylulose 5-phosphate. Glu-230 is a binding site for Mn(2+).

It belongs to the DXR family. Mg(2+) serves as cofactor. Mn(2+) is required as a cofactor.

It carries out the reaction 2-C-methyl-D-erythritol 4-phosphate + NADP(+) = 1-deoxy-D-xylulose 5-phosphate + NADPH + H(+). It functions in the pathway isoprenoid biosynthesis; isopentenyl diphosphate biosynthesis via DXP pathway; isopentenyl diphosphate from 1-deoxy-D-xylulose 5-phosphate: step 1/6. In terms of biological role, catalyzes the NADPH-dependent rearrangement and reduction of 1-deoxy-D-xylulose-5-phosphate (DXP) to 2-C-methyl-D-erythritol 4-phosphate (MEP). The protein is 1-deoxy-D-xylulose 5-phosphate reductoisomerase of Shewanella sp. (strain MR-4).